The sequence spans 104 residues: Large ribosomal subunit protein uL23 (104 aa).

It belongs to the universal ribosomal protein uL23 family. Part of the 50S ribosomal subunit. Contacts protein L29, and trigger factor when it is bound to the ribosome.

Its function is as follows. One of the early assembly proteins it binds 23S rRNA. One of the proteins that surrounds the polypeptide exit tunnel on the outside of the ribosome. Forms the main docking site for trigger factor binding to the ribosome. The protein is Large ribosomal subunit protein uL23 of Burkholderia multivorans (strain ATCC 17616 / 249).